A 32-amino-acid polypeptide reads, in one-letter code: Chlorophyll a-b binding protein 2, chloroplastic (32 aa).

Chlorophyll a-binding residues include Glu-19 and His-22. Arg-24 is a chlorophyll b binding site.

Belongs to the light-harvesting chlorophyll a/b-binding (LHC) protein family. In terms of assembly, the LHC complex consists of chlorophyll a-b binding proteins. The cofactor is Binds at least 14 chlorophylls (8 Chl-a and 6 Chl-b) and carotenoids such as lutein and neoxanthin.. Post-translationally, photoregulated by reversible phosphorylation of its threonine residues.

The protein localises to the plastid. Its subcellular location is the chloroplast thylakoid membrane. The light-harvesting complex (LHC) functions as a light receptor, it captures and delivers excitation energy to photosystems with which it is closely associated. This Populus euphratica (Euphrates poplar) protein is Chlorophyll a-b binding protein 2, chloroplastic.